A 435-amino-acid polypeptide reads, in one-letter code: Methylenetetrahydrofolate--tRNA-(uracil-5-)-methyltransferase TrmFO (435 aa).

10–15 (GAGLAG) lines the FAD pocket.

It belongs to the MnmG family. TrmFO subfamily. FAD serves as cofactor.

It localises to the cytoplasm. It carries out the reaction uridine(54) in tRNA + (6R)-5,10-methylene-5,6,7,8-tetrahydrofolate + NADH + H(+) = 5-methyluridine(54) in tRNA + (6S)-5,6,7,8-tetrahydrofolate + NAD(+). The catalysed reaction is uridine(54) in tRNA + (6R)-5,10-methylene-5,6,7,8-tetrahydrofolate + NADPH + H(+) = 5-methyluridine(54) in tRNA + (6S)-5,6,7,8-tetrahydrofolate + NADP(+). Functionally, catalyzes the folate-dependent formation of 5-methyl-uridine at position 54 (M-5-U54) in all tRNAs. This Bacillus velezensis (strain DSM 23117 / BGSC 10A6 / LMG 26770 / FZB42) (Bacillus amyloliquefaciens subsp. plantarum) protein is Methylenetetrahydrofolate--tRNA-(uracil-5-)-methyltransferase TrmFO.